Reading from the N-terminus, the 527-residue chain is Glucose-6-phosphate isomerase (527 aa).

Glu-347 functions as the Proton donor in the catalytic mechanism. Catalysis depends on residues His-378 and Lys-493.

The protein belongs to the GPI family.

Its subcellular location is the cytoplasm. The enzyme catalyses alpha-D-glucose 6-phosphate = beta-D-fructose 6-phosphate. It participates in carbohydrate biosynthesis; gluconeogenesis. Its pathway is carbohydrate degradation; glycolysis; D-glyceraldehyde 3-phosphate and glycerone phosphate from D-glucose: step 2/4. Its function is as follows. Catalyzes the reversible isomerization of glucose-6-phosphate to fructose-6-phosphate. This Chlamydia caviae (strain ATCC VR-813 / DSM 19441 / 03DC25 / GPIC) (Chlamydophila caviae) protein is Glucose-6-phosphate isomerase.